The primary structure comprises 1487 residues: Chromosome partition protein MukB (1487 aa).

34–41 (GGNGAGKS) contributes to the ATP binding site. 5 coiled-coil regions span residues 297 to 426 (SSRE…LEKA), 460 to 666 (ALKH…RLAS), 781 to 806 (RAAR…AKAA), 836 to 1111 (EQAL…RTFV), and 1210 to 1266 (VEAI…LSNI). Positions 667 to 784 (PGGSNDPRLK…VIPLFGRAAR (118 aa)) are flexible hinge.

This sequence belongs to the SMC family. MukB subfamily. As to quaternary structure, homodimerization via its hinge domain. Binds to DNA via its C-terminal region. Interacts, and probably forms a ternary complex, with MukE and MukF via its C-terminal region. The complex formation is stimulated by calcium or magnesium. Interacts with tubulin-related protein FtsZ.

It is found in the cytoplasm. The protein resides in the nucleoid. Plays a central role in chromosome condensation, segregation and cell cycle progression. Functions as a homodimer, which is essential for chromosome partition. Involved in negative DNA supercoiling in vivo, and by this means organize and compact chromosomes. May achieve or facilitate chromosome segregation by condensation DNA from both sides of a centrally located replisome during cell division. The sequence is that of Chromosome partition protein MukB from Vibrio vulnificus (strain YJ016).